The chain runs to 203 residues: Superoxide dismutase [Mn/Fe] (203 aa).

4 residues coordinate Fe(3+): H27, H81, D163, and H167. Mn(2+)-binding residues include H27, H81, D163, and H167.

Belongs to the iron/manganese superoxide dismutase family. Requires Mn(2+) as cofactor. It depends on Fe(3+) as a cofactor.

It catalyses the reaction 2 superoxide + 2 H(+) = H2O2 + O2. Functionally, destroys superoxide anion radicals which are normally produced within the cells and which are toxic to biological systems. Catalyzes the dismutation of superoxide anion radicals into O2 and H2O2 by successive reduction and oxidation of the transition metal ion at the active site. The polypeptide is Superoxide dismutase [Mn/Fe] (sodA) (Streptococcus mutans serotype c (strain ATCC 700610 / UA159)).